An 849-amino-acid polypeptide reads, in one-letter code: SMY2 homolog 2 (849 aa).

One can recognise a GYF domain in the interval 149–205 (ESQWKYIDSNGNIQGPFGTNNMSQWYQGGYFTPTLQICRLATSPEPFGVNDRFIRLG). 4 disordered regions span residues 305-505 (APLS…TTNL), 527-547 (DLKK…QLDR), 593-612 (TKIN…IKPD), and 634-661 (NRAS…NTSN). Positions 308-318 (STTSSRSNKTT) are enriched in low complexity. Residues 319–331 (SSHEEKVPSHEEA) show a composition bias toward basic and acidic residues. Thr350 bears the Phosphothreonine mark. Composition is skewed to basic and acidic residues over residues 361–375 (TKQE…KEQN), 387–403 (VDRK…KSKD), and 425–443 (LLEE…EEQR). A coiled-coil region spans residues 410 to 484 (EEQKRFAKAE…EKQKELLNNI (75 aa)). Basic residues predominate over residues 444 to 455 (KLKKEKKLKQKQ). A compositionally biased stretch (basic and acidic residues) spans 456 to 479 (KKEEEKLKKKKKEEGKLEKEKQKE). A compositionally biased stretch (polar residues) spans 483–505 (NILTGDTETPSSENTATSITTNL). Residues 594 to 605 (KINSQSKINKAN) are compositionally biased toward polar residues. Residues 644 to 661 (SRTPSPSSSALNSSNTSN) are compositionally biased toward low complexity.

Belongs to the SMY2/mpd2 family. Interacts with ribosomes. Interacts with EAP1 and MSL5 (via the GYP domain).

It localises to the cytoplasm. The protein is SMY2 homolog 2 (SYH1) of Saccharomyces cerevisiae (strain ATCC 204508 / S288c) (Baker's yeast).